The primary structure comprises 64 residues: Large ribosomal subunit protein uL30 (64 aa).

A disordered region spans residues 1 to 22; the sequence is MSEQVKRVRVTQVGSPIGRKPG.

Belongs to the universal ribosomal protein uL30 family. In terms of assembly, part of the 50S ribosomal subunit.

In Acidiphilium cryptum (strain JF-5), this protein is Large ribosomal subunit protein uL30.